Reading from the N-terminus, the 1153-residue chain is Nitric oxide synthase, inducible (1153 aa).

A DINNN-motif; mediates interaction with SPSB1, SPSB2 and SPSB4 motif is present at residues aspartate 23 to asparagine 27. Cysteine 110 and cysteine 115 together coordinate Zn(2+). Serine 118 provides a ligand contact to (6R)-L-erythro-5,6,7,8-tetrahydrobiopterin. Cysteine 200 lines the heme b pocket. Serine 234 is modified (phosphoserine; by PKA). L-arginine is bound by residues glutamine 263, tryptophan 372, tyrosine 373, and glutamate 377. Positions 381, 462, 463, and 476 each coordinate (6R)-L-erythro-5,6,7,8-tetrahydrobiopterin. Tyrosine 491 contributes to the heme b binding site. Positions leucine 515–serine 535 are calmodulin-binding. One can recognise a Flavodoxin-like domain in the interval valine 539–phenylalanine 677. FMN is bound by residues threonine 545, glutamate 546, threonine 547, lysine 549, and serine 550. A Phosphotyrosine modification is found at tyrosine 575. At serine 578 the chain carries Phosphoserine; by PKA. FMN is bound by residues serine 591, threonine 592, serine 628, arginine 633, cysteine 635, glutamate 661, and glutamine 665. Residues lysine 730 to proline 970 enclose the FAD-binding FR-type domain. Arginine 750 is a binding site for NADP(+). FAD is bound at residue histidine 772. At serine 892 the chain carries Phosphoserine; by PKA. FAD is bound by residues arginine 906, tyrosine 908, serine 909, threonine 924, and alanine 926. Threonine 929 serves as a coordination point for NADP(+). FAD-binding residues include tyrosine 930, valine 943, cysteine 944, and serine 945. Positions 984, 1017, 1046, 1047, 1053, 1055, 1057, and 1090 each coordinate NADP(+).

This sequence belongs to the NOS family. In terms of assembly, homodimer. Interacts with NHERF1. Interacts with GAPDH; induced by oxidatively-modified low-densitity lipoprotein (LDL(ox)). Interacts with S100A8 and S100A9 to form the iNOS-S100A8/9 transnitrosylase complex. Interacts with SPSB1, SPSB2 and SPSB4. Interacts with ELOC and CUL5 in the presence of SPSB1 or SPSB2 or SPSB4. Forms a complex with ASL, ASS1 and HSP90AA1; the complex regulates cell-autonomous L-arginine synthesis and citrulline recycling while channeling extracellular L-arginine to nitric oxide synthesis pathway. Heme b is required as a cofactor. It depends on FAD as a cofactor. The cofactor is FMN. (6R)-L-erythro-5,6,7,8-tetrahydrobiopterin serves as cofactor. Polyubiquitinated; mediated by SPSB1, SPSB2 and SPSB4, leading to proteasomal degradation. As to expression, expressed in the liver, retina, bone cells and airway epithelial cells of the lung. Not expressed in the platelets. Expressed in chondrocytes.

It is found in the cytoplasm. The protein localises to the cytosol. The enzyme catalyses 2 L-arginine + 3 NADPH + 4 O2 + H(+) = 2 L-citrulline + 2 nitric oxide + 3 NADP(+) + 4 H2O. Regulated by calcium/calmodulin. Aspirin inhibits expression and function of this enzyme and effects may be exerted at the level of translational/post-translational modification and directly on the catalytic activity. Produces nitric oxide (NO) which is a messenger molecule with diverse functions throughout the body. In macrophages, NO mediates tumoricidal and bactericidal actions. Also has nitrosylase activity and mediates cysteine S-nitrosylation of cytoplasmic target proteins such PTGS2/COX2. As component of the iNOS-S100A8/9 transnitrosylase complex involved in the selective inflammatory stimulus-dependent S-nitrosylation of GAPDH on 'Cys-247' implicated in regulation of the GAIT complex activity and probably multiple targets including ANXA5, EZR, MSN and VIM. Involved in inflammation, enhances the synthesis of pro-inflammatory mediators such as IL6 and IL8. The protein is Nitric oxide synthase, inducible of Homo sapiens (Human).